Consider the following 394-residue polypeptide: Elongation factor Tu 1 (394 aa).

The 195-residue stretch at 10 to 204 (KPHVNVGTIG…FLDSYIPEPE (195 aa)) folds into the tr-type G domain. A G1 region spans residues 19–26 (GHVDHGKT). Residue 19-26 (GHVDHGKT) participates in GTP binding. Thr26 is a binding site for Mg(2+). The interval 60-64 (GITIN) is G2. Residues 81 to 84 (DCPG) are G3. GTP-binding positions include 81–85 (DCPGH) and 136–139 (NKCD). Residues 136-139 (NKCD) form a G4 region. Residues 174–176 (SAL) are G5.

The protein belongs to the TRAFAC class translation factor GTPase superfamily. Classic translation factor GTPase family. EF-Tu/EF-1A subfamily. Monomer.

The protein resides in the cytoplasm. It carries out the reaction GTP + H2O = GDP + phosphate + H(+). Its function is as follows. GTP hydrolase that promotes the GTP-dependent binding of aminoacyl-tRNA to the A-site of ribosomes during protein biosynthesis. This is Elongation factor Tu 1 from Shigella sonnei (strain Ss046).